The chain runs to 113 residues: UPF0122 protein SSU98_0878 (113 aa).

Belongs to the UPF0122 family.

In terms of biological role, might take part in the signal recognition particle (SRP) pathway. This is inferred from the conservation of its genetic proximity to ftsY/ffh. May be a regulatory protein. The chain is UPF0122 protein SSU98_0878 from Streptococcus suis (strain 98HAH33).